We begin with the raw amino-acid sequence, 375 residues long: Protein RecA (375 aa).

Positions 1 to 20 are disordered; sequence MPAEMKSAASGSDPRSSGER. 79–86 contributes to the ATP binding site; sequence GPESSGKT.

Belongs to the RecA family.

It localises to the cytoplasm. Its function is as follows. Can catalyze the hydrolysis of ATP in the presence of single-stranded DNA, the ATP-dependent uptake of single-stranded DNA by duplex DNA, and the ATP-dependent hybridization of homologous single-stranded DNAs. It interacts with LexA causing its activation and leading to its autocatalytic cleavage. This is Protein RecA from Parasynechococcus marenigrum (strain WH8102).